Reading from the N-terminus, the 590-residue chain is Peroxisomal targeting signal receptor (590 aa).

A Glycyl cysteine thioester (Cys-Gly) (interchain with G-Cter in ubiquitin) cross-link involves residue Cys-6. Residues 7-29 form an amphipathic helix 1 (AH1) region; the sequence is SVGSNPLAQLNKHAQGQGSSLSN. Lys-18 participates in a covalent cross-link: Glycyl lysine isopeptide (Lys-Gly) (interchain with G-Cter in ubiquitin). The segment covering 18–30 has biased composition (polar residues); sequence KHAQGQGSSLSNT. The segment at 18-45 is disordered; sequence KHAQGQGSSLSNTHVRHSGGVSGSNVFR. An amphipathic helix 2 (AH2) region spans residues 56–74; sequence RQQLNSFMSQPMRLGEDKM. Short sequence motifs (wxxxF/Y motif) lie at residues 108-112, 139-143, and 178-182; these read WTREF, WKFRY, and WNDKF. The segment at 227-243 is amphipathic helix 4 (AH4); sequence FQEVWDSIQQDTEEMLS. 5 TPR repeats span residues 285–319, 320–353, 424–457, 459–491, and 493–525; these read NPNA…DPKH, VDAW…DPNN, PDIQ…NPND, LMWN…KPSF, and RARY…HDVE.

It belongs to the peroxisomal targeting signal receptor family. As to quaternary structure, interacts (via WxxxF/Y and LVxEF motifs) with PEX14; promoting translocation through the PEX13-PEX14 docking complex. Monoubiquitinated at Cys-6 by PEX2 during PEX5 passage through the retrotranslocation channel: monoubiquitination acts as a signal for PEX5 extraction and is required for proper export from peroxisomes and recycling. When PEX5 recycling is compromised, polyubiquitinated at Lys-18 by PEX10 during its passage through the retrotranslocation channel, leading to its degradation.

It localises to the cytoplasm. The protein localises to the cytosol. The protein resides in the peroxisome matrix. In terms of biological role, receptor that mediates peroxisomal import of proteins containing a C-terminal PTS1-type tripeptide peroxisomal targeting signal (SKL-type). Binds to cargo proteins containing a PTS1 peroxisomal targeting signal in the cytosol, and translocates them into the peroxisome matrix by passing through the PEX13-PEX14 docking complex along with cargo proteins. PEX5 receptor is then retrotranslocated into the cytosol, leading to release of bound cargo in the peroxisome matrix, and reset for a subsequent peroxisome import cycle. This is Peroxisomal targeting signal receptor (PEX5) from Candida glabrata (strain ATCC 2001 / BCRC 20586 / JCM 3761 / NBRC 0622 / NRRL Y-65 / CBS 138) (Yeast).